A 404-amino-acid chain; its full sequence is Histidinol dehydrogenase (404 aa).

Positions 114, 176, and 199 each coordinate NAD(+). The substrate site is built by Ser-222, Gln-244, and His-247. Zn(2+)-binding residues include Gln-244 and His-247. Active-site proton acceptor residues include Glu-300 and His-301. Substrate-binding residues include His-301, Asp-334, Glu-388, and His-393. Asp-334 is a binding site for Zn(2+). His-393 is a binding site for Zn(2+).

The protein belongs to the histidinol dehydrogenase family. The cofactor is Zn(2+).

It carries out the reaction L-histidinol + 2 NAD(+) + H2O = L-histidine + 2 NADH + 3 H(+). It participates in amino-acid biosynthesis; L-histidine biosynthesis; L-histidine from 5-phospho-alpha-D-ribose 1-diphosphate: step 9/9. Its function is as follows. Catalyzes the sequential NAD-dependent oxidations of L-histidinol to L-histidinaldehyde and then to L-histidine. This chain is Histidinol dehydrogenase (hisD), found in Archaeoglobus fulgidus (strain ATCC 49558 / DSM 4304 / JCM 9628 / NBRC 100126 / VC-16).